Consider the following 498-residue polypeptide: Isocitrate dehydrogenase [NADP], mitochondrial (498 aa).

Residues 164–166 (TIT) and R171 contribute to the NADP(+) site. T166 serves as a coordination point for substrate. Substrate is bound by residues 183–189 (SPNGTIR), R198, and R221. D339 is a Mn(2+) binding site. Position 347 (K347) interacts with NADP(+). D362 contacts Mn(2+). NADP(+) contacts are provided by residues 397 to 402 (GTVTRH) and N415.

This sequence belongs to the isocitrate and isopropylmalate dehydrogenases family. Mg(2+) serves as cofactor. Mn(2+) is required as a cofactor.

The protein localises to the mitochondrion. It catalyses the reaction D-threo-isocitrate + NADP(+) = 2-oxoglutarate + CO2 + NADPH. This is Isocitrate dehydrogenase [NADP], mitochondrial (icdA) from Aspergillus niger.